We begin with the raw amino-acid sequence, 104 residues long: Large ribosomal subunit protein uL24 (104 aa).

Belongs to the universal ribosomal protein uL24 family. As to quaternary structure, part of the 50S ribosomal subunit.

Its function is as follows. One of two assembly initiator proteins, it binds directly to the 5'-end of the 23S rRNA, where it nucleates assembly of the 50S subunit. One of the proteins that surrounds the polypeptide exit tunnel on the outside of the subunit. In Clostridium perfringens (strain SM101 / Type A), this protein is Large ribosomal subunit protein uL24.